Consider the following 82-residue polypeptide: Small ribosomal subunit protein uS17 (82 aa).

This sequence belongs to the universal ribosomal protein uS17 family. In terms of assembly, part of the 30S ribosomal subunit.

Its function is as follows. One of the primary rRNA binding proteins, it binds specifically to the 5'-end of 16S ribosomal RNA. This Rhodopseudomonas palustris (strain TIE-1) protein is Small ribosomal subunit protein uS17.